Consider the following 260-residue polypeptide: 4-hydroxy-tetrahydrodipicolinate reductase (260 aa).

NAD(+) is bound by residues G8–M13, E35, G91–T93, and A115–M118. Catalysis depends on H148, which acts as the Proton donor/acceptor. Position 149 (H149) interacts with (S)-2,3,4,5-tetrahydrodipicolinate. The active-site Proton donor is the K152. G158–T159 is a (S)-2,3,4,5-tetrahydrodipicolinate binding site.

Belongs to the DapB family.

It is found in the cytoplasm. It catalyses the reaction (S)-2,3,4,5-tetrahydrodipicolinate + NAD(+) + H2O = (2S,4S)-4-hydroxy-2,3,4,5-tetrahydrodipicolinate + NADH + H(+). The catalysed reaction is (S)-2,3,4,5-tetrahydrodipicolinate + NADP(+) + H2O = (2S,4S)-4-hydroxy-2,3,4,5-tetrahydrodipicolinate + NADPH + H(+). The protein operates within amino-acid biosynthesis; L-lysine biosynthesis via DAP pathway; (S)-tetrahydrodipicolinate from L-aspartate: step 4/4. Functionally, catalyzes the conversion of 4-hydroxy-tetrahydrodipicolinate (HTPA) to tetrahydrodipicolinate. This is 4-hydroxy-tetrahydrodipicolinate reductase from Rubrobacter xylanophilus (strain DSM 9941 / JCM 11954 / NBRC 16129 / PRD-1).